The following is a 66-amino-acid chain: MPKIKTRKAAAKRFRLTGSGKFMRRRAGHNHLLEHKTSKRKRKLAGVALVDKRDVVNVRLMLPNTH.

It belongs to the bacterial ribosomal protein bL35 family.

The protein is Large ribosomal subunit protein bL35 of Synechococcus sp. (strain JA-2-3B'a(2-13)) (Cyanobacteria bacterium Yellowstone B-Prime).